Reading from the N-terminus, the 26-residue chain is FWGHIWNAVKRVGANALHGAVTGALS.

Its function is as follows. Has strong antibacterial activity against the Gram-positive bacteria M.luteus, S.aureus, B.megaterium, A.viridans and E.faecalis, and against the Gram-negative bacterium K.pneumoniae. Has less potent antibacterial activity against the Gram-negative bacteria E.coli DH5alpha, S.typhimurium, P.aeruginosa, E.aerogenes and N.gonorrhoeae. Has moderate hemolytic activity against sheep erythrocytes. This Halocynthia papillosa (Red sea-squirt) protein is Halocyntin.